Consider the following 189-residue polypeptide: Glucose-6-phosphate isomerase (189 aa).

Fe cation is bound by residues His-88, His-90, Glu-97, and His-136.

The protein belongs to the archaeal-type GPI family. In terms of assembly, homodimer. Fe cation is required as a cofactor.

The protein resides in the cytoplasm. It catalyses the reaction alpha-D-glucose 6-phosphate = beta-D-fructose 6-phosphate. Its pathway is carbohydrate degradation; glycolysis; D-glyceraldehyde 3-phosphate and glycerone phosphate from D-glucose: step 2/4. The polypeptide is Glucose-6-phosphate isomerase (pgiA) (Pyrococcus abyssi (strain GE5 / Orsay)).